A 207-amino-acid chain; its full sequence is Ribosomal RNA large subunit methyltransferase E (207 aa).

Residues G49, W51, D69, D87, and D111 each contribute to the S-adenosyl-L-methionine site. K151 functions as the Proton acceptor in the catalytic mechanism.

This sequence belongs to the class I-like SAM-binding methyltransferase superfamily. RNA methyltransferase RlmE family.

The protein localises to the cytoplasm. The enzyme catalyses uridine(2552) in 23S rRNA + S-adenosyl-L-methionine = 2'-O-methyluridine(2552) in 23S rRNA + S-adenosyl-L-homocysteine + H(+). Specifically methylates the uridine in position 2552 of 23S rRNA at the 2'-O position of the ribose in the fully assembled 50S ribosomal subunit. The sequence is that of Ribosomal RNA large subunit methyltransferase E from Oleidesulfovibrio alaskensis (strain ATCC BAA-1058 / DSM 17464 / G20) (Desulfovibrio alaskensis).